Here is a 37-residue protein sequence, read N- to C-terminus: Large ribosomal subunit protein bL36c (37 aa).

This sequence belongs to the bacterial ribosomal protein bL36 family.

The protein resides in the plastid. It localises to the chloroplast. The polypeptide is Large ribosomal subunit protein bL36c (Piper cenocladum (Ant piper)).